The chain runs to 311 residues: Probable manganese-dependent inorganic pyrophosphatase (311 aa).

Residues histidine 9, aspartate 13, aspartate 15, aspartate 77, histidine 99, and aspartate 151 each contribute to the Mn(2+) site.

This sequence belongs to the PPase class C family. Mn(2+) is required as a cofactor.

The protein localises to the cytoplasm. It catalyses the reaction diphosphate + H2O = 2 phosphate + H(+). The polypeptide is Probable manganese-dependent inorganic pyrophosphatase (Streptococcus equi subsp. equi (strain 4047)).